We begin with the raw amino-acid sequence, 327 residues long: Aspartate carbamoyltransferase catalytic subunit (327 aa).

Carbamoyl phosphate is bound by residues Arg67 and Thr68. Lys95 contributes to the L-aspartate binding site. The carbamoyl phosphate site is built by Arg117, His145, and Gln148. Positions 178 and 232 each coordinate L-aspartate. The carbamoyl phosphate site is built by Gly273 and Pro274.

This sequence belongs to the aspartate/ornithine carbamoyltransferase superfamily. ATCase family. As to quaternary structure, heterododecamer (2C3:3R2) of six catalytic PyrB chains organized as two trimers (C3), and six regulatory PyrI chains organized as three dimers (R2).

The enzyme catalyses carbamoyl phosphate + L-aspartate = N-carbamoyl-L-aspartate + phosphate + H(+). The protein operates within pyrimidine metabolism; UMP biosynthesis via de novo pathway; (S)-dihydroorotate from bicarbonate: step 2/3. In terms of biological role, catalyzes the condensation of carbamoyl phosphate and aspartate to form carbamoyl aspartate and inorganic phosphate, the committed step in the de novo pyrimidine nucleotide biosynthesis pathway. This Parvibaculum lavamentivorans (strain DS-1 / DSM 13023 / NCIMB 13966) protein is Aspartate carbamoyltransferase catalytic subunit.